We begin with the raw amino-acid sequence, 376 residues long: 26S proteasome non-ATPase regulatory subunit 13 (376 aa).

The PCI domain maps to 171 to 338 (SYYKDALRFL…KRVHMTWVQP (168 aa)). The residue at position 298 (Lys-298) is an N6-acetyllysine.

Belongs to the proteasome subunit S11 family. As to quaternary structure, component of the 19S proteasome regulatory particle complex. The 26S proteasome consists of a 20S core particle (CP) and two 19S regulatory subunits (RP). The regulatory particle is made of a lid composed of 9 subunits including PSMD13, a base containing 6 ATPases and few additional components.

Its function is as follows. Component of the 26S proteasome, a multiprotein complex involved in the ATP-dependent degradation of ubiquitinated proteins. This complex plays a key role in the maintenance of protein homeostasis by removing misfolded or damaged proteins, which could impair cellular functions, and by removing proteins whose functions are no longer required. Therefore, the proteasome participates in numerous cellular processes, including cell cycle progression, apoptosis, or DNA damage repair. This Mus musculus (Mouse) protein is 26S proteasome non-ATPase regulatory subunit 13 (Psmd13).